The following is an 83-amino-acid chain: Putative beta-neurotoxin RjAa15f (83 aa).

The signal sequence occupies residues 1 to 18; that stretch reads MKILIFIIASFMLIGVEC. Residues 19–82 form the LCN-type CS-alpha/beta domain; the sequence is KEGYPMGRNG…VWDSSNNKCV (64 aa). Intrachain disulfides connect Cys29-Cys81, Cys33-Cys55, Cys40-Cys62, and Cys44-Cys64.

The protein belongs to the long (4 C-C) scorpion toxin superfamily. Sodium channel inhibitor family. Beta subfamily. In terms of tissue distribution, expressed by the venom gland.

It localises to the secreted. Beta toxins bind voltage-independently at site-4 of sodium channels (Nav) and shift the voltage of activation toward more negative potentials thereby affecting sodium channel activation and promoting spontaneous and repetitive firing. This Rhopalurus junceus (Caribbean blue scorpion) protein is Putative beta-neurotoxin RjAa15f.